The chain runs to 231 residues: Eukaryotic translation initiation factor 4E-1 (231 aa).

2 EIF4G-binding regions span residues 56–59 (HPLE) and 66–102 (FDNSTTKSRQTAWGSSLRNLYTFSTVEDFWGAYNNIH). MRNA-binding positions include 74–79 (RQTAWG), K106, and 124–125 (WE). A disulfide bond links C129 and C167. The segment at 150–159 (YTLLAMIGHQ) is EIF4G-binding. Residues 174–179 (RAKGEK) and 219–223 (KRLDR) each bind mRNA.

It belongs to the eukaryotic initiation factor 4E family. In terms of assembly, EIF4F is a multi-subunit complex, the composition of which varies with external and internal environmental conditions. It is composed of at least EIF4A, EIF4E and EIF4G. EIF4E is also known to interact with other partners. In higher plants two isoforms of EIF4F have been identified, named isoform EIF4F and isoform EIF(iso)4F. Isoform EIF4F has subunits p220 and p26, whereas isoform EIF(iso)4F has subunits p82 and p28. (Microbial infection) Interacts with potyvirus viral genome-linked protein (VPg); this interaction is possible in susceptible hosts but impaired in resistant plants. Post-translationally, according to the redox status, the Cys-129-Cys-167 disulfide bridge may have a role in regulating protein function by affecting its ability to bind capped mRNA.

It localises to the nucleus. The protein localises to the cytoplasm. In terms of biological role, component of the protein complex eIF4F, which is involved in the recognition of the mRNA cap, ATP-dependent unwinding of 5'-terminal secondary structure and recruitment of mRNA to the ribosome. Recognizes and binds the 7-methylguanosine-containing mRNA cap during an early step in the initiation of protein synthesis and facilitates ribosome binding by inducing the unwinding of the mRNAs secondary structures. Key component of recessive resistance to potyviruses. (Microbial infection) Susceptibility host factor required for viral infection (e.g. pepper mottle virus (PepMoV), potato virus Y (PVY) and tobacco etch virus (TEV)) by recruiting viral RNAs to the host ribosomal complex via an interaction with viral genome-linked protein (VPg). This is Eukaryotic translation initiation factor 4E-1 from Solanum habrochaites (Wild tomato).